The chain runs to 268 residues: Small ribosomal subunit protein eS1 (268 aa).

The segment at 1–21 (MAVGKNKGLSKGGKKGGKKKV) is disordered.

The protein belongs to the eukaryotic ribosomal protein eS1 family. Component of the small ribosomal subunit. Mature ribosomes consist of a small (40S) and a large (60S) subunit. The 40S subunit contains about 33 different proteins and 1 molecule of RNA (18S). The 60S subunit contains about 49 different proteins and 3 molecules of RNA (28S, 5.8S and 5S).

The protein resides in the cytoplasm. Functionally, essential for oogenesis; required for late follicle cell development. This chain is Small ribosomal subunit protein eS1, found in Drosophila mojavensis (Fruit fly).